Consider the following 448-residue polypeptide: tRNA-2-methylthio-N(6)-dimethylallyladenosine synthase (448 aa).

Positions 3–118 (KKVFIKTFGC…LPELLNARAA (116 aa)) constitute an MTTase N-terminal domain. Residues Cys-12, Cys-49, Cys-81, Cys-155, Cys-159, and Cys-162 each coordinate [4Fe-4S] cluster. Positions 141-374 (RVEGASAFVS…QAVINRNILE (234 aa)) constitute a Radical SAM core domain. The TRAM domain maps to 377 to 440 (QERVGTVQRL…TYTLRGEVVM (64 aa)).

It belongs to the methylthiotransferase family. MiaB subfamily. In terms of assembly, monomer. It depends on [4Fe-4S] cluster as a cofactor.

It localises to the cytoplasm. The catalysed reaction is N(6)-dimethylallyladenosine(37) in tRNA + (sulfur carrier)-SH + AH2 + 2 S-adenosyl-L-methionine = 2-methylsulfanyl-N(6)-dimethylallyladenosine(37) in tRNA + (sulfur carrier)-H + 5'-deoxyadenosine + L-methionine + A + S-adenosyl-L-homocysteine + 2 H(+). Functionally, catalyzes the methylthiolation of N6-(dimethylallyl)adenosine (i(6)A), leading to the formation of 2-methylthio-N6-(dimethylallyl)adenosine (ms(2)i(6)A) at position 37 in tRNAs that read codons beginning with uridine. This Acidovorax sp. (strain JS42) protein is tRNA-2-methylthio-N(6)-dimethylallyladenosine synthase.